Consider the following 357-residue polypeptide: U5 small nuclear ribonucleoprotein 40 kDa protein (357 aa).

K18 participates in a covalent cross-link: Glycyl lysine isopeptide (Lys-Gly) (interchain with G-Cter in SUMO2). R21 is modified (asymmetric dimethylarginine). WD repeat units follow at residues 64 to 103 (GHEG…DNYA), 107 to 146 (GHSG…RVKR), 149 to 189 (GHTS…AIQT), 191 to 230 (QNTY…LTYT), 233 to 272 (GHAD…PKER), 283 to 322 (NFEK…ILYK), and 325 to 357 (GHAG…GEIQ). Residue K270 forms a Glycyl lysine isopeptide (Lys-Gly) (interchain with G-Cter in SUMO2) linkage.

As to quaternary structure, component of the pre-catalytic and catalytic spliceosome complexes. Component of the postcatalytic spliceosome P complex. Part of the U5 snRNP complex. Interacts with PRPF8. Component of the U4/U6-U5 tri-snRNP complex composed of the U4, U6 and U5 snRNAs and at least PRPF3, PRPF4, PRPF6, PRPF8, PRPF31, SNRNP200, TXNL4A, WDR57, SNRNP40, DDX23, CD2BP2, PPIH, SNU13, EFTUD2, SART1 and USP39. Component of the minor spliceosome, which splices U12-type introns.

It localises to the nucleus. Functionally, required for pre-mRNA splicing as component of the activated spliceosome. Component of the U5 small nuclear ribonucleoprotein (snRNP) complex and the U4/U6-U5 tri-snRNP complex, building blocks of the spliceosome. As a component of the minor spliceosome, involved in the splicing of U12-type introns in pre-mRNAs. In Homo sapiens (Human), this protein is U5 small nuclear ribonucleoprotein 40 kDa protein (SNRNP40).